We begin with the raw amino-acid sequence, 1286 residues long: Protein patched (1286 aa).

The Cytoplasmic portion of the chain corresponds to 1 to 76 (MDRDSLPRVP…GSSVQKHAGK (76 aa)). The helical transmembrane segment at 77–92 (VLFVAILVLSTFCVGL) threads the bilayer. Over 93–427 (KSAQIHSKVH…DDILAKFSHP (335 aa)) the chain is Extracellular. Residues Asn-142, Asn-298, Asn-335, and Asn-388 are each glycosylated (N-linked (GlcNAc...) asparagine). Residues 428–448 (SALSIVIGVAVTVLYAFCTLL) traverse the membrane as a helical segment. The region spanning 428 to 583 (SALSIVIGVA…LLVFPAMISL (156 aa)) is the SSD domain. Residues 449-465 (RWRDPVRGQSSVGVAGV) are Cytoplasmic-facing. Residues 466–486 (LLMCFSTAAGLGLSALLGIVF) form a helical membrane-spanning segment. Topologically, residues 487-492 (NAASTQ) are extracellular. The chain crosses the membrane as a helical span at residues 493 to 511 (VVPFLALGLGVDHIFMLTA). Residues 512 to 532 (AYAESNRREQTKLILKKVGPS) are Cytoplasmic-facing. A helical membrane pass occupies residues 533–553 (ILFSACSTAGSFFAAAFIPVP). The Extracellular portion of the chain corresponds to 554–562 (ALKVFCLQA). A helical transmembrane segment spans residues 563–583 (AIVMCSNLAAALLVFPAMISL). Residues 584-677 (DLRRRTAGRA…QHYTPFLMRS (94 aa)) are Cytoplasmic-facing. Residues 678–699 (WVKFLTVMGFLAALISSLYAST) traverse the membrane as a helical segment. Residues 700 to 931 (RLQDGLDIID…IRDLSVKYEG (232 aa)) are Extracellular-facing. Asn-807 carries an N-linked (GlcNAc...) asparagine glycan. A helical transmembrane segment spans residues 932 to 952 (FGLPNYPSGIPFIFWEQYMTL). Residues 953-955 (RSS) are Cytoplasmic-facing. A helical transmembrane segment spans residues 956–976 (LAMILACVLLAALVLVSLLLL). The Extracellular portion of the chain corresponds to 977–1007 (SVWAAVLVILSVLASLAQIFGAMTLLGIKLS). The helical transmembrane segment at 1008–1028 (AIPAVILILSVGMMLCFNVLI) threads the bilayer. Over 1029–1056 (SLGFMTSVGNRQRRVQLSMQMSLGPLVH) the chain is Cytoplasmic. A helical membrane pass occupies residues 1057-1077 (GMLTSGVAVFMLSTSPFEFVI). The Extracellular segment spans residues 1078-1082 (RHFCW). Residues 1083–1103 (LLLVVLCVGACNSLLVFPILL) traverse the membrane as a helical segment. The Cytoplasmic portion of the chain corresponds to 1104-1286 (SMVGPEAELV…RAVRSYNFTS (183 aa)). Residues 1116 to 1237 (EHPDRISTPS…PPPFPTAYPP (122 aa)) are disordered. Polar residues-rich tracts occupy residues 1141 to 1152 (VQGSRSSRGSCQ) and 1165 to 1191 (PSLT…NDWT). The segment covering 1199-1216 (PASYAAPPPAYHKAAAQQ) has biased composition (low complexity). A compositionally biased stretch (pro residues) spans 1224–1235 (PTTPPPPFPTAY).

This sequence belongs to the patched family. In terms of assembly, interacts (via C-terminal cytoplasmic region) with CG5504/l(2)tid; the interaction is probably direct. Interacts with hh/hedgehog.

Its subcellular location is the membrane. Its function is as follows. Segmentation polarity protein. Acts as a receptor for the hedgehog protein (hh). Associates with the smoothened protein (SMO) to transduce the hedgehog signal leading to the activation of wingless, decapentaplegic and patched itself. Participates in cell interactions that establish pattern within the segment and the imaginal disks during development. In the absence of HH, represses the constitutive signaling activity of smo through fused (FU). This Drosophila melanogaster (Fruit fly) protein is Protein patched.